Reading from the N-terminus, the 331-residue chain is DNA-directed RNA polymerase subunit alpha (331 aa).

Residues 1-233 (MVREEIAVST…DLFLPFLHAE (233 aa)) are alpha N-terminal domain (alpha-NTD). The alpha C-terminal domain (alpha-CTD) stretch occupies residues 268 to 331 (ALKRVFIDQS…GILQKRFAID (64 aa)).

Belongs to the RNA polymerase alpha chain family. In plastids the minimal PEP RNA polymerase catalytic core is composed of four subunits: alpha, beta, beta', and beta''. When a (nuclear-encoded) sigma factor is associated with the core the holoenzyme is formed, which can initiate transcription.

Its subcellular location is the plastid. The protein resides in the chloroplast. It carries out the reaction RNA(n) + a ribonucleoside 5'-triphosphate = RNA(n+1) + diphosphate. DNA-dependent RNA polymerase catalyzes the transcription of DNA into RNA using the four ribonucleoside triphosphates as substrates. This Illicium oligandrum (Star anise) protein is DNA-directed RNA polymerase subunit alpha.